The following is a 301-amino-acid chain: Coiled-coil domain-containing protein 50 (301 aa).

Residues 57-131 (QVAKQLQEEE…LQEEKKRKKH (75 aa)) are a coiled coil. Composition is skewed to basic and acidic residues over residues 123–142 (QEEKKRKKHYPESQEHKVYE), 161–175 (VYDKPRREQELSDAE), and 214–262 (AFKK…DKSS). Disordered regions lie at residues 123-175 (QEEK…SDAE) and 214-301 (AFKK…RRKQ).

Phosphorylated on tyrosine residues.

Involved in EGFR signaling. This chain is Coiled-coil domain-containing protein 50 (CCDC50), found in Gallus gallus (Chicken).